A 967-amino-acid chain; its full sequence is A disintegrin and metalloproteinase with thrombospondin motifs 1 (967 aa).

Positions 1 to 54 (MQPEVPLGSGKLKPCSDMGDIQRAAKFRSSQSAHMLLLLLASITMLLCVRGAHG) are cleaved as a signal peptide. Residues 55–252 (RPTEEDEELV…TGPGSIRKKR (198 aa)) constitute a propeptide that is removed on maturation. Residues 198-252 (RGSGGAKCGVMDEETLPTSNSGRESQNTPDQWPLRNPTPQGAGKPTGPGSIRKKR) form a disordered region. The short motif at 203–210 (AKCGVMDE) is the Cysteine switch element. C205 provides a ligand contact to Zn(2+). The segment covering 213–227 (LPTSNSGRESQNTPD) has biased composition (polar residues). In terms of domain architecture, Peptidase M12B spans 258-467 (RYVETMLVAD…GHGECLMDKP (210 aa)). Ca(2+) is bound by residues E261, D344, and D351. 4 disulfide bridges follow: C333–C385, C362–C367, C379–C462, and C417–C446. H401 contributes to the Zn(2+) binding site. Residue E402 is part of the active site. The Zn(2+) site is built by H405 and H411. Ca(2+) is bound by residues C462 and D465. Residues 476–558 (DLPGTLYDAN…TDMKHFATPV (83 aa)) enclose the Disintegrin domain. Disulfide bonds link C488/C511, C499/C521, C506/C540, and C534/C545. A glycan (N-linked (GlcNAc...) asparagine) is linked at N547. The TSP type-1 1 domain maps to 559–614 (HGSWGPWGPWGDCSRTCGGGVQYTMRECDNPVPKNGGKYCEGKRVRYRSCNIEDCP). Cystine bridges form between C571–C608, C575–C613, and C586–C598. N-linked (GlcNAc...) asparagine glycans are attached at residues N720, N764, and N782. The interval 725 to 857 (KKISGTVTST…PFNAIPTFSE (133 aa)) is spacer. TSP type-1 domains follow at residues 854–910 (TFSE…LPCP) and 911–967 (RWQV…TQCS). A glycan (N-linked (GlcNAc...) asparagine) is linked at N945.

Zn(2+) is required as a cofactor. Post-translationally, the precursor is cleaved by a furin endopeptidase. In terms of processing, glycosylated. Can be O-fucosylated by POFUT2 on a serine or a threonine residue found within the consensus sequence C1-X(2)-(S/T)-C2-G of the TSP type-1 repeat domains where C1 and C2 are the first and second cysteine residue of the repeat, respectively. Fucosylated repeats can then be further glycosylated by the addition of a beta-1,3-glucose residue by the glucosyltransferase, B3GALTL. Fucosylation mediates the efficient secretion of ADAMTS family members. Can also be C-glycosylated with one or two mannose molecules on tryptophan residues within the consensus sequence W-X-X-W of the TPRs, and N-glycosylated. These other glycosylations can also facilitate secretion.

Its subcellular location is the secreted. The protein localises to the extracellular space. The protein resides in the extracellular matrix. Metalloprotease which cleaves aggrecan, a cartilage proteoglycan, at the '1683-Glu-|-Leu-1684' site (within the chondroitin sulfate attachment domain), and may be involved in its turnover. Also cleaves COMP. Has angiogenic inhibitor activity. May play a critical role in follicular rupture. This Rattus norvegicus (Rat) protein is A disintegrin and metalloproteinase with thrombospondin motifs 1 (Adamts1).